The primary structure comprises 231 residues: Large ribosomal subunit protein uL1 (231 aa).

This sequence belongs to the universal ribosomal protein uL1 family. In terms of assembly, part of the 50S ribosomal subunit.

Binds directly to 23S rRNA. The L1 stalk is quite mobile in the ribosome, and is involved in E site tRNA release. Its function is as follows. Protein L1 is also a translational repressor protein, it controls the translation of the L11 operon by binding to its mRNA. In Buchnera aphidicola subsp. Acyrthosiphon pisum (strain 5A), this protein is Large ribosomal subunit protein uL1.